A 560-amino-acid polypeptide reads, in one-letter code: Phenylalanine--tRNA ligase beta subunit (560 aa).

The B5 domain occupies 279–354 (LTPKEFEVDL…IAYGYNNIEP (76 aa)). Positions 332, 338, 341, and 342 each coordinate Mg(2+).

Belongs to the phenylalanyl-tRNA synthetase beta subunit family. Type 2 subfamily. Tetramer of two alpha and two beta subunits. It depends on Mg(2+) as a cofactor.

It localises to the cytoplasm. It carries out the reaction tRNA(Phe) + L-phenylalanine + ATP = L-phenylalanyl-tRNA(Phe) + AMP + diphosphate + H(+). This chain is Phenylalanine--tRNA ligase beta subunit, found in Thermococcus sibiricus (strain DSM 12597 / MM 739).